The primary structure comprises 110 residues: UPF0145 protein (110 aa).

It belongs to the UPF0145 family.

The protein is UPF0145 protein of Listeria welshimeri.